The chain runs to 573 residues: MTQISRQQYADLYGPTIGDKIRLGDSDLYVEIEKDLRATYGDELQYGGGKTLRDGMGSENFLTQEAGCLDLVITNVTVIDAIQGVVKADVGIRNGRIVGLGKAGNPSTMDGVTRGLVTGASTDAISGEHLILTAGGMDTHVHYIAPQQVEAALSNGITTLWGGGIGPVDGTNGVTTTNGPWNLEMMLRSIEGLPINFGIQGKGNSTGIAPLIEHLEAGAAGFKVHEDYGATPAAIRACLSVADEYDVSVAVHTDTLNESGYVEDTIAAFDGRSVHTYHSEGAGGGHAPDLLKVVGQNNILPSSTNPTLPCGKNSVAELFDMIMVCHNLNPKIPSDVAFAESRVRAETIVAESVLHDMGAISMIGSDSQAMGRIGETFLRAIQTADAMKKARGPLPEDAPGNDNFRVLRYIAKVTINPALTAGVGDVIGSIESGKFADLVLWEPAFFGVKPKLVLKGGLVAWANMGDPNASLPTPQPMYYRPMFAAYGSALQKTSITFVSRAAYDKGVADRFGLQRLVMPVSGTRVIGKAHMVRNSYLPNIEVDPQTFAVKVDGVHATVKPPQSISLNQLYFFS.

The Urease domain maps to 135–573 (GGMDTHVHYI…ISLNQLYFFS (439 aa)). Ni(2+) contacts are provided by His140, His142, and Lys223. At Lys223 the chain carries N6-carboxylysine. Substrate is bound at residue His225. Residues His252 and His278 each coordinate Ni(2+). His326 functions as the Proton donor in the catalytic mechanism. Asp366 provides a ligand contact to Ni(2+).

It belongs to the metallo-dependent hydrolases superfamily. Urease alpha subunit family. Heterotrimer of UreA (gamma), UreB (beta) and UreC (alpha) subunits. Three heterotrimers associate to form the active enzyme. Ni cation is required as a cofactor. In terms of processing, carboxylation allows a single lysine to coordinate two nickel ions.

The protein localises to the cytoplasm. It catalyses the reaction urea + 2 H2O + H(+) = hydrogencarbonate + 2 NH4(+). It participates in nitrogen metabolism; urea degradation; CO(2) and NH(3) from urea (urease route): step 1/1. Functionally, disrupting the ure2 operon has no effect on urease activity, or pathogen survival in BALB/c mice when inoculated by gavage, but confers slightly enhanced resistance to low pH killing in vitro. The chain is Urease subunit alpha 2 from Brucella suis biovar 1 (strain 1330).